We begin with the raw amino-acid sequence, 199 residues long: Shikimate kinase (199 aa).

Position 32-37 (32-37) interacts with ATP; that stretch reads GSGKTS. T36 contributes to the Mg(2+) binding site. Substrate-binding residues include D54, R78, and G100. An ATP-binding site is contributed by R138. A substrate-binding site is contributed by R157.

Belongs to the shikimate kinase family. Monomer. It depends on Mg(2+) as a cofactor.

Its subcellular location is the cytoplasm. It catalyses the reaction shikimate + ATP = 3-phosphoshikimate + ADP + H(+). It participates in metabolic intermediate biosynthesis; chorismate biosynthesis; chorismate from D-erythrose 4-phosphate and phosphoenolpyruvate: step 5/7. Its function is as follows. Catalyzes the specific phosphorylation of the 3-hydroxyl group of shikimic acid using ATP as a cosubstrate. The sequence is that of Shikimate kinase from Synechococcus sp. (strain CC9605).